Reading from the N-terminus, the 126-residue chain is Small ribosomal subunit protein uS13 (126 aa).

The disordered stretch occupies residues 92–126 (HRMGLPVRGQRTRTNARTRRGRRQTVAGKKKAPGK). Residues 101–126 (QRTRTNARTRRGRRQTVAGKKKAPGK) are compositionally biased toward basic residues.

Belongs to the universal ribosomal protein uS13 family. As to quaternary structure, part of the 30S ribosomal subunit. Forms a loose heterodimer with protein S19. Forms two bridges to the 50S subunit in the 70S ribosome.

Located at the top of the head of the 30S subunit, it contacts several helices of the 16S rRNA. In the 70S ribosome it contacts the 23S rRNA (bridge B1a) and protein L5 of the 50S subunit (bridge B1b), connecting the 2 subunits; these bridges are implicated in subunit movement. Contacts the tRNAs in the A and P-sites. This Nostoc punctiforme (strain ATCC 29133 / PCC 73102) protein is Small ribosomal subunit protein uS13.